Consider the following 345-residue polypeptide: Krueppel-like factor 3 (345 aa).

A repressor domain region spans residues 1 to 74 (MLMFDPVPVK…TVNKRSSPPS (74 aa)). Lys10 is covalently cross-linked (Glycyl lysine isopeptide (Lys-Gly) (interchain with G-Cter in SUMO)). Residues 60–68 (EPVDLTVNK) carry the 9aaTAD; inactive motif. The CTBP-binding motif motif lies at 61-65 (PVDLT). The segment at 66-112 (VNKRSSPPSAGNSPSSLKFPSSHRRASPGLSMPSSSPPIKKYSPPSP) is disordered. Residue Lys68 forms a Glycyl lysine isopeptide (Lys-Gly) (interchain with G-Cter in SUMO2) linkage. Low complexity-rich tracts occupy residues 70 to 81 (SSPPSAGNSPSS) and 92 to 108 (SPGLSMPSSSPPIKKYS). Ser71, Ser92, Ser101, Ser108, and Ser111 each carry phosphoserine. Glycyl lysine isopeptide (Lys-Gly) (interchain with G-Cter in SUMO2) cross-links involve residues Lys196 and Lys198. Phosphoserine is present on residues Ser216, Ser224, and Ser250. 3 C2H2-type zinc fingers span residues 260–284 (HRCDYDGCNKVYTKSSHLKAHRRTH), 290–314 (YKCTWEGCTWKFARSDELTRHFRKH), and 320–342 (FQCPDCDRSFSRSDHLALHRKRH).

The protein belongs to the krueppel C2H2-type zinc-finger protein family. In terms of assembly, monomer. In terms of processing, sumoylated with SUMO1. Sumoylation is enhanced by PIAS1, PIAS2alpha and PIAS2beta, and PIAS4, but not by Pc2. Enhances transcriptional repression, but has no effect on DNA binding. Sumoylation on Lys-198 is the major site.

It localises to the nucleus. Its function is as follows. Binds to the CACCC box of erythroid cell-expressed genes. May play a role in hematopoiesis. The protein is Krueppel-like factor 3 (KLF3) of Homo sapiens (Human).